The chain runs to 683 residues: PTS system mannose-specific EIIBCA component (683 aa).

The region spanning Met-1–Ala-89 is the PTS EIIB type-1 domain. Catalysis depends on Cys-28, which acts as the Phosphocysteine intermediate; for EIIB activity. The PTS EIIC type-1 domain occupies Glu-117–Lys-476. A run of 10 helical transmembrane segments spans residues Ile-126–Phe-146, Tyr-162–Ala-182, Trp-193–Ala-213, Val-225–Trp-245, Met-260–Gly-280, Phe-303–Trp-323, Pro-344–Ile-364, Leu-376–Leu-396, Gly-409–Phe-429, and Leu-442–Leu-462. The region spanning Asp-550–Asn-654 is the PTS EIIA type-1 domain. The active-site Tele-phosphohistidine intermediate; for EIIA activity is the His-602.

The protein localises to the cell membrane. The catalysed reaction is D-mannose(out) + N(pros)-phospho-L-histidyl-[protein] = D-mannose 6-phosphate(in) + L-histidyl-[protein]. The phosphoenolpyruvate-dependent sugar phosphotransferase system (sugar PTS), a major carbohydrate active -transport system, catalyzes the phosphorylation of incoming sugar substrates concomitantly with their translocation across the cell membrane. This system is involved in mannose transport. In Corynebacterium glutamicum (strain ATCC 13032 / DSM 20300 / JCM 1318 / BCRC 11384 / CCUG 27702 / LMG 3730 / NBRC 12168 / NCIMB 10025 / NRRL B-2784 / 534), this protein is PTS system mannose-specific EIIBCA component (ptsM).